The chain runs to 130 residues: Small ribosomal subunit protein uS9 (130 aa).

It belongs to the universal ribosomal protein uS9 family.

The sequence is that of Small ribosomal subunit protein uS9 from Ectopseudomonas mendocina (strain ymp) (Pseudomonas mendocina).